The chain runs to 106 residues: Glycoprotein GP16 (106 aa).

Post-translationally, glycosylated.

The protein localises to the host cytoplasm. Functionally, may be involved in formation or transport of the nucleocapsid-containing vesicles around the nuclear membrane. The protein is Glycoprotein GP16 (GP16) of Autographa californica nuclear polyhedrosis virus (AcMNPV).